A 145-amino-acid chain; its full sequence is Putative sterol 14-demethylase-like protein (145 aa).

Residues 5-25 (YYTLLKTSVAIIIVFVVAKLI) form a helical membrane-spanning segment.

This sequence belongs to the cytochrome P450 family. Expressed specifically in roots.

The protein localises to the membrane. The chain is Putative sterol 14-demethylase-like protein (CYP51G2) from Arabidopsis thaliana (Mouse-ear cress).